The sequence spans 300 residues: Mitochondrial tricarboxylate transporter 1 (300 aa).

3 Solcar repeats span residues 8 to 98 (VSPS…FRSM), 107 to 197 (LSNS…LRDW), and 209 to 294 (INWL…VVWL). 6 helical membrane passes run 11 to 31 (SVSV…TFPI), 67 to 87 (PKGL…KAGV), 114 to 134 (LAGM…SETI), 172 to 191 (GVVP…LGTY), 208 to 228 (LINW…AVYG), and 277 to 297 (LIVS…LLAG).

Belongs to the mitochondrial carrier (TC 2.A.29) family.

It is found in the mitochondrion membrane. Functionally, mitochondrial tricarboxylate transporter; part of the gene cluster that mediates the biosynthesis of itaconic acid and 2-hydroxyparaconate. Cis-aconitate is secreted by the mitochondrial tricarboxylate transporter MTT1. In the cytosol cis-aconitate is converted into trans-aconitate via isomerization by the aconitate-delta-isomerase ADI1. Decarboxylation of trans-aconitate by the trans-aconitate decarboxylase TAD1 then leads then to the production of itaconic acid. The cytochrome P450 monooxygenase CYP3 further converts itaconate to 2-hydroxyparaconate via oxidation of the double bond, leading to a transient epoxide, which can subsequently be lactonized to produce 2-hydroxyparaconate. Secretion of itaconate and possibly 2-hydroxyparaconate into the medium is mediated by the major facilitator ITP1. The glyoxalase domain-containing protein RDO1 is not involved in the biosynthesis of itaconate and 2-hydroxyparaconate, however, it might play a role in the further conversion of 2-hydroxyparaconate to itatartarate. The chain is Mitochondrial tricarboxylate transporter 1 from Mycosarcoma maydis (Corn smut fungus).